Here is a 113-residue protein sequence, read N- to C-terminus: Large ribosomal subunit protein bL19 (113 aa).

It belongs to the bacterial ribosomal protein bL19 family.

In terms of biological role, this protein is located at the 30S-50S ribosomal subunit interface and may play a role in the structure and function of the aminoacyl-tRNA binding site. This Rhodococcus jostii (strain RHA1) protein is Large ribosomal subunit protein bL19.